Consider the following 64-residue polypeptide: Large ribosomal subunit protein bL35 (64 aa).

This sequence belongs to the bacterial ribosomal protein bL35 family.

This chain is Large ribosomal subunit protein bL35, found in Streptomyces avermitilis (strain ATCC 31267 / DSM 46492 / JCM 5070 / NBRC 14893 / NCIMB 12804 / NRRL 8165 / MA-4680).